The chain runs to 529 residues: Peptide chain release factor 3 (529 aa).

A tr-type G domain is found at A11–Q280. GTP-binding positions include S20–T27, D88–H92, and N142–D145.

This sequence belongs to the TRAFAC class translation factor GTPase superfamily. Classic translation factor GTPase family. PrfC subfamily.

It localises to the cytoplasm. In terms of biological role, increases the formation of ribosomal termination complexes and stimulates activities of RF-1 and RF-2. It binds guanine nucleotides and has strong preference for UGA stop codons. It may interact directly with the ribosome. The stimulation of RF-1 and RF-2 is significantly reduced by GTP and GDP, but not by GMP. The protein is Peptide chain release factor 3 of Alcanivorax borkumensis (strain ATCC 700651 / DSM 11573 / NCIMB 13689 / SK2).